Here is a 166-residue protein sequence, read N- to C-terminus: UPF0304 protein VFMJ11_1926 (166 aa).

The protein belongs to the UPF0304 family.

This is UPF0304 protein VFMJ11_1926 from Aliivibrio fischeri (strain MJ11) (Vibrio fischeri).